Consider the following 227-residue polypeptide: Cytochrome c oxidase subunit 2 (227 aa).

The Mitochondrial intermembrane segment spans residues 1 to 14 (MAYPLQLGFQDATS). A helical membrane pass occupies residues 15-45 (PIMEELLHFHDHTLMIVFLISSLVLYIISLM). Over 46-59 (LTTKLTHTSTMDAQ) the chain is Mitochondrial matrix. A helical transmembrane segment spans residues 60–87 (EVETIWTILPAIILILIALPSLRILYMM). The Mitochondrial intermembrane segment spans residues 88–227 (DEINNPSLTI…HFEKWSTSML (140 aa)). 6 residues coordinate Cu cation: His161, Cys196, Glu198, Cys200, His204, and Met207. Glu198 provides a ligand contact to Mg(2+).

Belongs to the cytochrome c oxidase subunit 2 family. As to quaternary structure, component of the cytochrome c oxidase (complex IV, CIV), a multisubunit enzyme composed of 14 subunits. The complex is composed of a catalytic core of 3 subunits MT-CO1, MT-CO2 and MT-CO3, encoded in the mitochondrial DNA, and 11 supernumerary subunits COX4I, COX5A, COX5B, COX6A, COX6B, COX6C, COX7A, COX7B, COX7C, COX8 and NDUFA4, which are encoded in the nuclear genome. The complex exists as a monomer or a dimer and forms supercomplexes (SCs) in the inner mitochondrial membrane with NADH-ubiquinone oxidoreductase (complex I, CI) and ubiquinol-cytochrome c oxidoreductase (cytochrome b-c1 complex, complex III, CIII), resulting in different assemblies (supercomplex SCI(1)III(2)IV(1) and megacomplex MCI(2)III(2)IV(2)). Found in a complex with TMEM177, COA6, COX18, COX20, SCO1 and SCO2. Interacts with TMEM177 in a COX20-dependent manner. Interacts with COX20. Interacts with COX16. Cu cation serves as cofactor.

It localises to the mitochondrion inner membrane. The catalysed reaction is 4 Fe(II)-[cytochrome c] + O2 + 8 H(+)(in) = 4 Fe(III)-[cytochrome c] + 2 H2O + 4 H(+)(out). Functionally, component of the cytochrome c oxidase, the last enzyme in the mitochondrial electron transport chain which drives oxidative phosphorylation. The respiratory chain contains 3 multisubunit complexes succinate dehydrogenase (complex II, CII), ubiquinol-cytochrome c oxidoreductase (cytochrome b-c1 complex, complex III, CIII) and cytochrome c oxidase (complex IV, CIV), that cooperate to transfer electrons derived from NADH and succinate to molecular oxygen, creating an electrochemical gradient over the inner membrane that drives transmembrane transport and the ATP synthase. Cytochrome c oxidase is the component of the respiratory chain that catalyzes the reduction of oxygen to water. Electrons originating from reduced cytochrome c in the intermembrane space (IMS) are transferred via the dinuclear copper A center (CU(A)) of subunit 2 and heme A of subunit 1 to the active site in subunit 1, a binuclear center (BNC) formed by heme A3 and copper B (CU(B)). The BNC reduces molecular oxygen to 2 water molecules using 4 electrons from cytochrome c in the IMS and 4 protons from the mitochondrial matrix. The chain is Cytochrome c oxidase subunit 2 (MT-CO2) from Rhinoceros unicornis (Greater Indian rhinoceros).